A 188-amino-acid polypeptide reads, in one-letter code: NAD(P)H-quinone oxidoreductase subunit J (188 aa).

Positions Met1 to Ser12 are enriched in polar residues. The interval Met1–Pro23 is disordered.

Belongs to the complex I 30 kDa subunit family. As to quaternary structure, NDH-1 can be composed of about 15 different subunits; different subcomplexes with different compositions have been identified which probably have different functions.

The protein localises to the cellular thylakoid membrane. It carries out the reaction a plastoquinone + NADH + (n+1) H(+)(in) = a plastoquinol + NAD(+) + n H(+)(out). It catalyses the reaction a plastoquinone + NADPH + (n+1) H(+)(in) = a plastoquinol + NADP(+) + n H(+)(out). Its function is as follows. NDH-1 shuttles electrons from an unknown electron donor, via FMN and iron-sulfur (Fe-S) centers, to quinones in the respiratory and/or the photosynthetic chain. The immediate electron acceptor for the enzyme in this species is believed to be plastoquinone. Couples the redox reaction to proton translocation, and thus conserves the redox energy in a proton gradient. Cyanobacterial NDH-1 also plays a role in inorganic carbon-concentration. The protein is NAD(P)H-quinone oxidoreductase subunit J of Synechococcus sp. (strain CC9605).